The sequence spans 232 residues: Ornithine carbamoyltransferase (232 aa).

Carbamoyl phosphate-binding positions include Gln15, Arg39, and 66 to 69 (HPTQ). Residues Asn99, Asp163, and 167-168 (SM) contribute to the L-ornithine site. Carbamoyl phosphate contacts are provided by residues 204 to 207 (HCLP) and Thr232.

It belongs to the aspartate/ornithine carbamoyltransferase superfamily. OTCase family.

The protein localises to the cytoplasm. The enzyme catalyses carbamoyl phosphate + L-ornithine = L-citrulline + phosphate + H(+). It functions in the pathway amino-acid biosynthesis; L-arginine biosynthesis; L-arginine from L-ornithine and carbamoyl phosphate: step 1/3. Its function is as follows. Reversibly catalyzes the transfer of the carbamoyl group from carbamoyl phosphate (CP) to the N(epsilon) atom of ornithine (ORN) to produce L-citrulline. The protein is Ornithine carbamoyltransferase (argF) of Neisseria flava.